The chain runs to 380 residues: 1-deoxy-D-xylulose 5-phosphate reductoisomerase (380 aa).

Residues T10, G11, S12, I13, G36, R37, N38, and N120 each coordinate NADPH. K121 serves as a coordination point for 1-deoxy-D-xylulose 5-phosphate. E122 contributes to the NADPH binding site. D146 is a Mn(2+) binding site. Residues S147, E148, S172, and H195 each coordinate 1-deoxy-D-xylulose 5-phosphate. Residue E148 participates in Mn(2+) binding. An NADPH-binding site is contributed by G201. Positions 208, 213, 214, and 217 each coordinate 1-deoxy-D-xylulose 5-phosphate. E217 is a Mn(2+) binding site.

This sequence belongs to the DXR family. It depends on Mg(2+) as a cofactor. Mn(2+) is required as a cofactor.

The catalysed reaction is 2-C-methyl-D-erythritol 4-phosphate + NADP(+) = 1-deoxy-D-xylulose 5-phosphate + NADPH + H(+). It participates in isoprenoid biosynthesis; isopentenyl diphosphate biosynthesis via DXP pathway; isopentenyl diphosphate from 1-deoxy-D-xylulose 5-phosphate: step 1/6. Catalyzes the NADPH-dependent rearrangement and reduction of 1-deoxy-D-xylulose-5-phosphate (DXP) to 2-C-methyl-D-erythritol 4-phosphate (MEP). This Listeria monocytogenes serotype 4a (strain HCC23) protein is 1-deoxy-D-xylulose 5-phosphate reductoisomerase.